The chain runs to 81 residues: Cytochrome b559 subunit alpha (81 aa).

The chain crosses the membrane as a helical span at residues 21-35 (VIHSITIPMLFIAGW). Residue His23 coordinates heme.

Belongs to the PsbE/PsbF family. As to quaternary structure, heterodimer of an alpha subunit and a beta subunit. PSII is composed of 1 copy each of membrane proteins PsbA, PsbB, PsbC, PsbD, PsbE, PsbF, PsbH, PsbI, PsbJ, PsbK, PsbL, PsbM, PsbT, PsbX, PsbY, PsbZ, Psb30/Ycf12, peripheral proteins PsbO, CyanoQ (PsbQ), PsbU, PsbV and a large number of cofactors. It forms dimeric complexes. Heme b serves as cofactor.

The protein resides in the cellular thylakoid membrane. Its function is as follows. This b-type cytochrome is tightly associated with the reaction center of photosystem II (PSII). PSII is a light-driven water:plastoquinone oxidoreductase that uses light energy to abstract electrons from H(2)O, generating O(2) and a proton gradient subsequently used for ATP formation. It consists of a core antenna complex that captures photons, and an electron transfer chain that converts photonic excitation into a charge separation. This is Cytochrome b559 subunit alpha from Picosynechococcus sp. (strain ATCC 27264 / PCC 7002 / PR-6) (Agmenellum quadruplicatum).